We begin with the raw amino-acid sequence, 312 residues long: Olfactory receptor 2M5 (312 aa).

At 1–25 (MAWENQTFNSDFILLGIFNHSPTHT) the chain is on the extracellular side. Asn-5 carries an N-linked (GlcNAc...) asparagine glycan. The helical transmembrane segment at 26-49 (FLFFLVLAIFSVAFMGNSVMVLLI) threads the bilayer. Residues 50 to 57 (YLDTQLHT) are Cytoplasmic-facing. Residues 58-79 (PMYFLLSQLFLMDLMLICSTVP) form a helical membrane-spanning segment. Residues 80–100 (KMAFNYLSGSKSISMAGCATQ) are Extracellular-facing. Cys-97 and Cys-189 are joined by a disulfide. The helical transmembrane segment at 101–120 (IFFYVSLLGSECFLLAVMSY) threads the bilayer. Over 121 to 139 (DRYIAICHPLRYTNLMRPK) the chain is Cytoplasmic. Residues 140 to 158 (ICGLMTAFSWILGSMDAII) traverse the membrane as a helical segment. The Extracellular portion of the chain corresponds to 159 to 195 (DAVATFSFSYCGSREIAHFFCDFPSLLILSCNDTSIF). The chain crosses the membrane as a helical span at residues 196–219 (EKVLFICCIVMIVFPVAIIIASYA). Topologically, residues 220–236 (RVILAVIHMGSGEGRRK) are cytoplasmic. Residues 237–259 (AFTTCSSHLMVVGMYYGAGLFMY) form a helical membrane-spanning segment. Residues 260 to 272 (IRPTSDRSPMQDK) are Extracellular-facing. The chain crosses the membrane as a helical span at residues 273–292 (LVSVFYTILTPMLNPLIYSL). Over 293-311 (RNKEVTRALRKVLGKGKCG) the chain is Cytoplasmic.

It belongs to the G-protein coupled receptor 1 family.

The protein localises to the cell membrane. Odorant receptor. This is Olfactory receptor 2M5 (OR2M5) from Homo sapiens (Human).